The sequence spans 326 residues: Glycerol-3-phosphate dehydrogenase [NAD(P)+] (326 aa).

S10, F11, R31, and K108 together coordinate NADPH. K108, G136, and S138 together coordinate sn-glycerol 3-phosphate. Position 140 (A140) interacts with NADPH. 5 residues coordinate sn-glycerol 3-phosphate: K191, D246, S256, R257, and N258. K191 functions as the Proton acceptor in the catalytic mechanism. R257 serves as a coordination point for NADPH. NADPH-binding residues include I281 and E283.

It belongs to the NAD-dependent glycerol-3-phosphate dehydrogenase family.

It is found in the cytoplasm. It catalyses the reaction sn-glycerol 3-phosphate + NAD(+) = dihydroxyacetone phosphate + NADH + H(+). It carries out the reaction sn-glycerol 3-phosphate + NADP(+) = dihydroxyacetone phosphate + NADPH + H(+). The protein operates within membrane lipid metabolism; glycerophospholipid metabolism. Catalyzes the reduction of the glycolytic intermediate dihydroxyacetone phosphate (DHAP) to sn-glycerol 3-phosphate (G3P), the key precursor for phospholipid synthesis. This is Glycerol-3-phosphate dehydrogenase [NAD(P)+] from Ehrlichia chaffeensis (strain ATCC CRL-10679 / Arkansas).